A 270-amino-acid polypeptide reads, in one-letter code: MTSGAPCLLIDAGNSRIKWALVQAGGSQIASGALTHGGEHQPDWLSLPTPGGAWLSNVAGESVARRIAALLEARWPQLPLTTISACAQQCGVTNSYTAPHMLGSDRWAGLIGAHAAFPGEHLLIATFGTATTLEALRADGCFVGGLIAPGWTLMMRSLGEHTAQLPTLDASAARGLLDGSTRDAARRGPFFATDTPRSLSAGCTLAQAGLVERMWRDLQDEWQVPVRLVVSGGAVDEVASALKVPHTRHDSLVLSGLALIAAGRAAERGA.

An ATP-binding site is contributed by 11 to 18; the sequence is DAGNSRIK. Substrate-binding positions include Y96 and 103-106; that span reads GSDR. Residue D105 is the Proton acceptor of the active site. Residue T129 coordinates ATP. A substrate-binding site is contributed by T195.

This sequence belongs to the type III pantothenate kinase family. As to quaternary structure, homodimer. It depends on NH4(+) as a cofactor. The cofactor is K(+).

It localises to the cytoplasm. The catalysed reaction is (R)-pantothenate + ATP = (R)-4'-phosphopantothenate + ADP + H(+). It participates in cofactor biosynthesis; coenzyme A biosynthesis; CoA from (R)-pantothenate: step 1/5. Its function is as follows. Catalyzes the phosphorylation of pantothenate (Pan), the first step in CoA biosynthesis. This Paraburkholderia xenovorans (strain LB400) protein is Type III pantothenate kinase.